The chain runs to 312 residues: Serine/threonine-protein phosphatase PP2A catalytic subunit (312 aa).

Mn(2+)-binding residues include Asp60, His62, Asp88, and Asn120. The active-site Proton donor is His121. His170 and His244 together coordinate Mn(2+).

This sequence belongs to the PPP phosphatase family. PP-2A subfamily. Requires Mn(2+) as cofactor.

The protein localises to the cytoplasm. It catalyses the reaction O-phospho-L-seryl-[protein] + H2O = L-seryl-[protein] + phosphate. It carries out the reaction O-phospho-L-threonyl-[protein] + H2O = L-threonyl-[protein] + phosphate. This Nicotiana tabacum (Common tobacco) protein is Serine/threonine-protein phosphatase PP2A catalytic subunit.